Here is a 72-residue protein sequence, read N- to C-terminus: Variant surface glycoprotein MITAT 1.1000BC (72 aa).

Aspartate 50 is lipidated: GPI-anchor amidated aspartate. The propeptide at 51–72 is removed in mature form; sequence GSFLVNKKFALMVYDFVSLLAF.

The protein localises to the cell membrane. Its function is as follows. VSG forms a coat on the surface of the parasite. The trypanosome evades the immune response of the host by expressing a series of antigenically distinct VSGs from an estimated 1000 VSG genes. In Trypanosoma brucei brucei, this protein is Variant surface glycoprotein MITAT 1.1000BC.